The following is a 1059-amino-acid chain: Disks large-associated protein 2 (1059 aa).

Disordered stretches follow at residues 31-56 (GEPE…EEDI) and 244-311 (TKSH…SDST). The span at 244–261 (TKSHSLEGSSKSNINGTK) shows a compositional bias: polar residues. Over residues 262 to 271 (SEGRMDDHHQ) the composition is skewed to basic and acidic residues. Residues 272–285 (SHLSKHSKRSKSKE) are compositionally biased toward basic residues. Phosphoserine is present on residues serine 302, serine 308, serine 390, and serine 456. 2 disordered regions span residues 446–466 (GDEE…VALR) and 632–669 (VTAQ…NSMD). Positions 632–645 (VTAQSSTESTQDAY) are enriched in polar residues. Phosphoserine is present on residues serine 667, serine 670, serine 673, and serine 720. A disordered region spans residues 723 to 756 (VQDSEFPDHQPYPRSDVETATDSDTESRGLREYH). Phosphothreonine is present on threonine 743. Serine 745 carries the phosphoserine modification. Positions 747 to 756 (TESRGLREYH) are enriched in basic and acidic residues. A phosphoserine mark is found at serine 776, serine 811, serine 983, and serine 1012. Residues 985–1024 (ERKEERKIPPPIPKKPPKGKFPITREKSLDLPDRQRQEAR) are disordered. Over residues 1007 to 1024 (ITREKSLDLPDRQRQEAR) the composition is skewed to basic and acidic residues.

It belongs to the SAPAP family. In terms of assembly, interacts with DLG4/PSD-95. As to expression, expressed in various brain areas.

The protein localises to the cell membrane. The protein resides in the postsynaptic density. It localises to the synapse. In terms of biological role, may play a role in the molecular organization of synapses and neuronal cell signaling. Could be an adapter protein linking ion channel to the subsynaptic cytoskeleton. May induce enrichment of PSD-95/SAP90 at the plasma membrane. This chain is Disks large-associated protein 2, found in Rattus norvegicus (Rat).